We begin with the raw amino-acid sequence, 351 residues long: Phosphoribosylformylglycinamidine cyclo-ligase (351 aa).

Belongs to the AIR synthase family.

The protein resides in the cytoplasm. It carries out the reaction 2-formamido-N(1)-(5-O-phospho-beta-D-ribosyl)acetamidine + ATP = 5-amino-1-(5-phospho-beta-D-ribosyl)imidazole + ADP + phosphate + H(+). The protein operates within purine metabolism; IMP biosynthesis via de novo pathway; 5-amino-1-(5-phospho-D-ribosyl)imidazole from N(2)-formyl-N(1)-(5-phospho-D-ribosyl)glycinamide: step 2/2. This is Phosphoribosylformylglycinamidine cyclo-ligase from Burkholderia vietnamiensis (strain G4 / LMG 22486) (Burkholderia cepacia (strain R1808)).